Consider the following 193-residue polypeptide: dCTP deaminase (193 aa).

DCTP-binding positions include 110–115 (RSSLAR), Asp128, 136–138 (VLE), Tyr171, Lys178, and Gln182. Glu138 functions as the Proton donor/acceptor in the catalytic mechanism.

It belongs to the dCTP deaminase family. In terms of assembly, homotrimer.

It carries out the reaction dCTP + H2O + H(+) = dUTP + NH4(+). It functions in the pathway pyrimidine metabolism; dUMP biosynthesis; dUMP from dCTP (dUTP route): step 1/2. In terms of biological role, catalyzes the deamination of dCTP to dUTP. The sequence is that of dCTP deaminase from Tolumonas auensis (strain DSM 9187 / NBRC 110442 / TA 4).